Reading from the N-terminus, the 98-residue chain is Large ribosomal subunit protein uL23 (98 aa).

Belongs to the universal ribosomal protein uL23 family. Part of the 50S ribosomal subunit. Contacts protein L29, and trigger factor when it is bound to the ribosome.

One of the early assembly proteins it binds 23S rRNA. One of the proteins that surrounds the polypeptide exit tunnel on the outside of the ribosome. Forms the main docking site for trigger factor binding to the ribosome. This is Large ribosomal subunit protein uL23 from Saccharophagus degradans (strain 2-40 / ATCC 43961 / DSM 17024).